Reading from the N-terminus, the 37-residue chain is Large ribosomal subunit protein bL36c (37 aa).

This sequence belongs to the bacterial ribosomal protein bL36 family.

The protein resides in the plastid. It localises to the chloroplast. This Bigelowiella natans (Pedinomonas minutissima) protein is Large ribosomal subunit protein bL36c.